Here is a 135-residue protein sequence, read N- to C-terminus: Translation initiation factor 2 subunit beta (135 aa).

This sequence belongs to the eIF-2-beta/eIF-5 family. Heterotrimer composed of an alpha, a beta and a gamma chain.

Its function is as follows. eIF-2 functions in the early steps of protein synthesis by forming a ternary complex with GTP and initiator tRNA. This chain is Translation initiation factor 2 subunit beta (eif2b), found in Methanothermobacter thermautotrophicus (strain ATCC 29096 / DSM 1053 / JCM 10044 / NBRC 100330 / Delta H) (Methanobacterium thermoautotrophicum).